Consider the following 858-residue polypeptide: Putative glutamate--cysteine ligase 2-3 (858 aa).

The tract at residues 1–372 (MSDARNVAVG…RDVPPAGASL (372 aa)) is carboxylate-amine ligase. The unknown stretch occupies residues 373–858 (GVAPAVSAPD…GSKDTWIPRR (486 aa)).

In the N-terminal section; belongs to the glutamate--cysteine ligase type 2 family. YbdK subfamily.

The enzyme catalyses L-cysteine + L-glutamate + ATP = gamma-L-glutamyl-L-cysteine + ADP + phosphate + H(+). ATP-dependent carboxylate-amine ligase which exhibits weak glutamate--cysteine ligase activity. The sequence is that of Putative glutamate--cysteine ligase 2-3 from Frankia alni (strain DSM 45986 / CECT 9034 / ACN14a).